The primary structure comprises 592 residues: Transmembrane 9 superfamily member 3 (592 aa).

A signal peptide spans Met-1–Ala-19. Over Gly-20 to Trp-229 the chain is Lumenal. Residues Phe-230 to Leu-250 traverse the membrane as a helical segment. At Met-251–Gln-302 the chain is on the cytoplasmic side. A helical transmembrane segment spans residues Leu-303 to Asn-323. Residues Arg-324–Gly-325 lie on the Lumenal side of the membrane. A helical membrane pass occupies residues Ala-326–Ala-346. Residues Ser-347–Thr-365 are Cytoplasmic-facing. Residues Gly-366 to Ala-386 form a helical membrane-spanning segment. The Lumenal portion of the chain corresponds to Tyr-387–Thr-397. The helical transmembrane segment at Ile-398–Ile-418 threads the bilayer. The Cytoplasmic portion of the chain corresponds to Ala-419 to Gln-452. Residues Met-453–Ala-473 form a helical membrane-spanning segment. The Lumenal segment spans residues Ser-474–Ser-485. Residues Ile-486–Thr-506 form a helical membrane-spanning segment. The Cytoplasmic segment spans residues Tyr-507 to Ser-521. A helical transmembrane segment spans residues Phe-522 to Ala-542. Residues Arg-543–Ser-553 lie on the Lumenal side of the membrane. Residues Phe-554–Gly-574 form a helical membrane-spanning segment. At Phe-575–Glu-592 the chain is on the cytoplasmic side. Positions Phe-581–Tyr-586 match the Endoplasmic reticulum export signal motif. The Golgi retention signal motif lies at Lys-590–Glu-592.

The protein belongs to the nonaspanin (TM9SF) (TC 9.A.2) family.

The protein resides in the endosome membrane. It is found in the golgi apparatus membrane. In Arabidopsis thaliana (Mouse-ear cress), this protein is Transmembrane 9 superfamily member 3.